The chain runs to 537 residues: CTP synthase (537 aa).

Positions M1–L268 are amidoligase domain. S14 serves as a coordination point for CTP. S14 is a binding site for UTP. ATP contacts are provided by residues S15–L20 and D72. Mg(2+)-binding residues include D72 and E142. CTP is bound by residues D149–E151, K188–Q193, and K224. Residues K188–Q193 and K224 contribute to the UTP site. The region spanning K293–D533 is the Glutamine amidotransferase type-1 domain. G352 contributes to the L-glutamine binding site. C379 (nucleophile; for glutamine hydrolysis) is an active-site residue. L-glutamine is bound by residues L380–Q383, E403, and R461. Residues H506 and E508 contribute to the active site.

Belongs to the CTP synthase family. Homotetramer.

It carries out the reaction UTP + L-glutamine + ATP + H2O = CTP + L-glutamate + ADP + phosphate + 2 H(+). It catalyses the reaction L-glutamine + H2O = L-glutamate + NH4(+). The enzyme catalyses UTP + NH4(+) + ATP = CTP + ADP + phosphate + 2 H(+). Its pathway is pyrimidine metabolism; CTP biosynthesis via de novo pathway; CTP from UDP: step 2/2. Its activity is regulated as follows. Allosterically activated by GTP, when glutamine is the substrate; GTP has no effect on the reaction when ammonia is the substrate. The allosteric effector GTP functions by stabilizing the protein conformation that binds the tetrahedral intermediate(s) formed during glutamine hydrolysis. Inhibited by the product CTP, via allosteric rather than competitive inhibition. Functionally, catalyzes the ATP-dependent amination of UTP to CTP with either L-glutamine or ammonia as the source of nitrogen. Regulates intracellular CTP levels through interactions with the four ribonucleotide triphosphates. This chain is CTP synthase, found in Chlamydia pneumoniae (Chlamydophila pneumoniae).